The chain runs to 430 residues: Histidinol dehydrogenase (430 aa).

Substrate-binding residues include serine 237, glutamine 259, and histidine 262. 2 residues coordinate Zn(2+): glutamine 259 and histidine 262. Residues glutamate 327 and histidine 328 each act as proton acceptor in the active site. Substrate-binding residues include histidine 328, aspartate 361, glutamate 415, and histidine 420. Aspartate 361 contacts Zn(2+). Histidine 420 lines the Zn(2+) pocket.

Belongs to the histidinol dehydrogenase family. Zn(2+) is required as a cofactor.

It catalyses the reaction L-histidinol + 2 NAD(+) + H2O = L-histidine + 2 NADH + 3 H(+). The protein operates within amino-acid biosynthesis; L-histidine biosynthesis; L-histidine from 5-phospho-alpha-D-ribose 1-diphosphate: step 9/9. In terms of biological role, catalyzes the sequential NAD-dependent oxidations of L-histidinol to L-histidinaldehyde and then to L-histidine. The chain is Histidinol dehydrogenase from Sulfurimonas denitrificans (strain ATCC 33889 / DSM 1251) (Thiomicrospira denitrificans (strain ATCC 33889 / DSM 1251)).